Reading from the N-terminus, the 99-residue chain is MGLFMIIAILLFQKPTVTEQLKKCWNNYVQGHCRKICRVNEVPEALCENGRYCCLNIKELEACKKITKPPRPKPATLALTLQDYVTIIENFPSLKTQST.

An N-terminal signal peptide occupies residues Met-1–Gln-20. 3 cysteine pairs are disulfide-bonded: Cys-24-Cys-53, Cys-33-Cys-47, and Cys-37-Cys-54. A propeptide spanning residues Ile-66–Thr-99 is cleaved from the precursor.

Belongs to the beta-defensin family.

It localises to the secreted. Has antibacterial activity. The sequence is that of Beta-defensin 127 (DEFB127) from Homo sapiens (Human).